Here is a 382-residue protein sequence, read N- to C-terminus: Dodecanoyl-[acyl-carrier-protein] hydrolase, chloroplastic (382 aa).

The N-terminal 83 residues, 1 to 83 (MATTSLASAF…FSAAEKQWTN (83 aa)), are a transit peptide targeting the chloroplast. Residues Asn283, His285, and Cys320 contribute to the active site.

It belongs to the acyl-ACP thioesterase family. Forms homodimers. In terms of tissue distribution, expressed in developing cotyledons. Not detected in leaves.

The protein localises to the plastid. Its subcellular location is the chloroplast. It catalyses the reaction dodecanoyl-[ACP] + H2O = dodecanoate + holo-[ACP] + H(+). In terms of biological role, plays an essential role in chain termination during de novo fatty acid synthesis. High thioesterase activity for lauroyl-ACP versus other acyl-ACPs. The polypeptide is Dodecanoyl-[acyl-carrier-protein] hydrolase, chloroplastic (Umbellularia californica (California bay laurel)).